A 341-amino-acid chain; its full sequence is UDP-N-acetylenolpyruvoylglucosamine reductase (341 aa).

Residues 15–185 (LAQSCADLVE…TAVGLRLVKR (171 aa)) enclose the FAD-binding PCMH-type domain. Arg-161 is a catalytic residue. Catalysis depends on Ser-231, which acts as the Proton donor. Residue Glu-327 is part of the active site.

Belongs to the MurB family. The cofactor is FAD.

Its subcellular location is the cytoplasm. The enzyme catalyses UDP-N-acetyl-alpha-D-muramate + NADP(+) = UDP-N-acetyl-3-O-(1-carboxyvinyl)-alpha-D-glucosamine + NADPH + H(+). It participates in cell wall biogenesis; peptidoglycan biosynthesis. Its function is as follows. Cell wall formation. This is UDP-N-acetylenolpyruvoylglucosamine reductase from Shewanella baltica (strain OS195).